We begin with the raw amino-acid sequence, 248 residues long: Non-specific acid phosphatase (248 aa).

The first 20 residues, 1–20 (MKKLLAVFCAGAFVSTSVFA), serve as a signal peptide directing secretion.

It belongs to the class A bacterial acid phosphatase family.

Its subcellular location is the periplasm. It catalyses the reaction a phosphate monoester + H2O = an alcohol + phosphate. The protein is Non-specific acid phosphatase (phoN) of Providencia stuartii.